The following is an 837-amino-acid chain: Tuftelin-interacting protein 11 (837 aa).

2 stretches are compositionally biased toward basic and acidic residues: residues 1 to 13 and 53 to 64; these read MSLS…GEGR and VWAERDSDDERP. 3 disordered regions span residues 1 to 21, 53 to 72, and 85 to 133; these read MSLS…DDER, VWAE…KRAR, and LKKG…KGFA. Ser2, Ser59, and Ser98 each carry phosphoserine. The span at 91 to 102 shows a compositional bias: acidic residues; sequence EEAELEDSDDEE. Over residues 103–116 the composition is skewed to basic and acidic residues; it reads RPVKQDDFPKDFGP. At Ser144 the chain carries Phosphoserine. Residues 149-195 form the G-patch domain; the sequence is TKGIGQKLLQKMGYVPGRGLGKNAQGIINPIEAKQRKGKGAVGAYGS. The interval 179 to 236 is disordered; the sequence is IEAKQRKGKGAVGAYGSERTTQSMQDFPVVDSEEEAEEEFQKGLSQWRKDPSGSKKKP. Ser210 is subject to Phosphoserine. The Nuclear localization signal signature appears at 700–705; it reads VKDKFN. The required for nuclear speckle localization stretch occupies residues 710–734; sequence IMNRAVSSNVGAYMQPGARENIAYL.

It belongs to the TFP11/STIP family. Identified in the spliceosome C complex. Found in the Intron Large (IL) complex, a post-mRNA release spliceosomal complex containing the excised intron, U2, U5 and U6 snRNPs, and splicing factors. Interacts with TUFT1. Interacts with DHX15; indicative for a recruitment of DHX15 to the IL complex. Interacts with GCFC2.

It localises to the cytoplasm. Its subcellular location is the nucleus. Involved in pre-mRNA splicing, specifically in spliceosome disassembly during late-stage splicing events. Intron turnover seems to proceed through reactions in two lariat-intron associated complexes termed Intron Large (IL) and Intron Small (IS). In cooperation with DHX15 seems to mediate the transition of the U2, U5 and U6 snRNP-containing IL complex to the snRNP-free IS complex leading to efficient debranching and turnover of excised introns. May play a role in the differentiation of ameloblasts and odontoblasts or in the forming of the enamel extracellular matrix. In Macaca fascicularis (Crab-eating macaque), this protein is Tuftelin-interacting protein 11 (TFIP11).